Consider the following 211-residue polypeptide: uncharacterized protein (211 aa).

Disordered regions lie at residues 45-74 (RSCGRSSTGGCSPCSGPGPSSPRTSRGALS) and 147-211 (AETR…WEEP). Residues 48-71 (GRSSTGGCSPCSGPGPSSPRTSRG) show a composition bias toward low complexity. Residues 195–205 (DSGSIKMSENE) are compositionally biased toward polar residues.

This is an uncharacterized protein from Homo sapiens (Human).